Consider the following 179-residue polypeptide: Large ribosomal subunit protein uL5 (179 aa).

It belongs to the universal ribosomal protein uL5 family. In terms of assembly, part of the 50S ribosomal subunit; part of the 5S rRNA/L5/L18/L25 subcomplex. Contacts the 5S rRNA and the P site tRNA. Forms a bridge to the 30S subunit in the 70S ribosome.

Its function is as follows. This is one of the proteins that bind and probably mediate the attachment of the 5S RNA into the large ribosomal subunit, where it forms part of the central protuberance. In the 70S ribosome it contacts protein S13 of the 30S subunit (bridge B1b), connecting the 2 subunits; this bridge is implicated in subunit movement. Contacts the P site tRNA; the 5S rRNA and some of its associated proteins might help stabilize positioning of ribosome-bound tRNAs. This chain is Large ribosomal subunit protein uL5, found in Rickettsia typhi (strain ATCC VR-144 / Wilmington).